We begin with the raw amino-acid sequence, 56 residues long: Mitoregulin (56 aa).

The Mitochondrial matrix segment spans residues 2–9; that stretch reads ADVSERTL. Residues 10-27 traverse the membrane as a helical segment; the sequence is QLSVLVAFASGVLLGWQA. Residues 28-56 are Mitochondrial intermembrane-facing; that stretch reads NRLRRRYLDWRKRRLQDKLAATQKKLDLA.

In terms of assembly, interacts with mitochondrial trifunctional enzyme, a heterotetrameric complex composed of 2 HADHA subunits and 2 HADHB subunits. Interacts with cytochrome b5 reductase CYB5R3; the interaction is required to maintain cellular lipid composition and leads to stimulation of mitochondrial respiratory complex I activity. Interacts with ATP synthase subunit ATP5F1B/ATP5B.

It localises to the mitochondrion inner membrane. In terms of biological role, positively regulates mitochondrial complex assembly and/or stability. Increases mitochondrial membrane potential while decreasing mitochondrial reactive oxygen species. Increases mitochondrial respiration rate. Increased mitochondrial respiratory activity promotes myogenic differentiation which facilitates muscle growth and regeneration. Increases mitochondrial calcium retention capacity. Plays a role in maintenance of cellular lipid composition through its interaction with cytochrome b5 reductase CYB5R3 which is required for mitochondrial respiratory complex I activity. Interacts with the mitochondrial trifunctional enzyme complex (MTE) and enhances fatty acid beta-oxidation. Not required for MTE formation or stability. Modulates triglyceride clearance in adipocytes through its role in regulating fatty acid beta-oxidation and lipolysis. The sequence is that of Mitoregulin from Homo sapiens (Human).